Consider the following 594-residue polypeptide: UvrABC system protein C (594 aa).

The region spanning 13 to 99 (NGSGVYQYFD…IKQLKPKYNI (87 aa)) is the GIY-YIG domain. The UVR domain maps to 205–240 (DKLIKELQLKMDRLSSNLRFEEALIYRDRISKIQKI).

This sequence belongs to the UvrC family. Interacts with UvrB in an incision complex.

It localises to the cytoplasm. Its function is as follows. The UvrABC repair system catalyzes the recognition and processing of DNA lesions. UvrC both incises the 5' and 3' sides of the lesion. The N-terminal half is responsible for the 3' incision and the C-terminal half is responsible for the 5' incision. The sequence is that of UvrABC system protein C from Helicobacter acinonychis (strain Sheeba).